Here is a 30-residue protein sequence, read N- to C-terminus: Trypsin inhibitor 3 (30 aa).

3 disulfide bridges follow: C4–C21, C11–C23, and C17–C29.

Belongs to the protease inhibitor I7 (squash-type serine protease inhibitor) family.

It localises to the secreted. Functionally, inhibits lysyl endopeptidase and trypsin. The polypeptide is Trypsin inhibitor 3 (Cucumis melo var. conomon (Oriental pickling melon)).